A 376-amino-acid chain; its full sequence is Chaperone protein DnaJ (376 aa).

The 66-residue stretch at 5-70 (DFYDVLGVSK…EKKQNYDNFG (66 aa)) folds into the J domain. Residues 137–215 (GKKQDIKFST…CNGQGNKQAS (79 aa)) form a CR-type zinc finger. Cys150, Cys153, Cys167, Cys170, Cys189, Cys192, Cys203, and Cys206 together coordinate Zn(2+). CXXCXGXG motif repeat units follow at residues 150–157 (CNTCNGNG), 167–174 (CTVCGGNG), 189–196 (CPQCAGSG), and 203–210 (CTDCNGQG).

This sequence belongs to the DnaJ family. In terms of assembly, homodimer. Requires Zn(2+) as cofactor.

The protein localises to the cytoplasm. Functionally, participates actively in the response to hyperosmotic and heat shock by preventing the aggregation of stress-denatured proteins and by disaggregating proteins, also in an autonomous, DnaK-independent fashion. Unfolded proteins bind initially to DnaJ; upon interaction with the DnaJ-bound protein, DnaK hydrolyzes its bound ATP, resulting in the formation of a stable complex. GrpE releases ADP from DnaK; ATP binding to DnaK triggers the release of the substrate protein, thus completing the reaction cycle. Several rounds of ATP-dependent interactions between DnaJ, DnaK and GrpE are required for fully efficient folding. Also involved, together with DnaK and GrpE, in the DNA replication of plasmids through activation of initiation proteins. This is Chaperone protein DnaJ from Pelagibacter ubique (strain HTCC1062).